A 475-amino-acid chain; its full sequence is ATP synthase subunit beta (475 aa).

152-159 (GGAGVGKT) serves as a coordination point for ATP.

It belongs to the ATPase alpha/beta chains family. In terms of assembly, F-type ATPases have 2 components, CF(1) - the catalytic core - and CF(0) - the membrane proton channel. CF(1) has five subunits: alpha(3), beta(3), gamma(1), delta(1), epsilon(1). CF(0) has three main subunits: a(1), b(2) and c(9-12). The alpha and beta chains form an alternating ring which encloses part of the gamma chain. CF(1) is attached to CF(0) by a central stalk formed by the gamma and epsilon chains, while a peripheral stalk is formed by the delta and b chains.

The protein resides in the cell inner membrane. It catalyses the reaction ATP + H2O + 4 H(+)(in) = ADP + phosphate + 5 H(+)(out). In terms of biological role, produces ATP from ADP in the presence of a proton gradient across the membrane. The catalytic sites are hosted primarily by the beta subunits. This is ATP synthase subunit beta from Wolbachia sp. subsp. Drosophila simulans (strain wRi).